A 119-amino-acid polypeptide reads, in one-letter code: Protein YdaY (119 aa).

This Escherichia coli (strain K12) protein is Protein YdaY (ydaY).